The primary structure comprises 156 residues: MGKKGAGYGLRGGDFRYNDETVARLINAVMLDGKKEVATKVVYDAFDIIASKSEDGDALEVFRKAMSNVAPLVEVRSKRVGGATYQIPMEVQPARRTALAFRWIKQFATRRGGRSMAEKLAAELLDASNEQGASVKKRDEVHRMADANKAFAHFRF.

This sequence belongs to the universal ribosomal protein uS7 family. Part of the 30S ribosomal subunit. Contacts proteins S9 and S11.

Its function is as follows. One of the primary rRNA binding proteins, it binds directly to 16S rRNA where it nucleates assembly of the head domain of the 30S subunit. Is located at the subunit interface close to the decoding center, probably blocks exit of the E-site tRNA. In Chlorobaculum parvum (strain DSM 263 / NCIMB 8327) (Chlorobium vibrioforme subsp. thiosulfatophilum), this protein is Small ribosomal subunit protein uS7.